A 347-amino-acid chain; its full sequence is Dihydroorotate dehydrogenase (quinone) (347 aa).

Residues 61–65 (AGLDK) and Thr85 each bind FMN. Residue Lys65 coordinates substrate. 110-114 (NRMGF) provides a ligand contact to substrate. Positions 138 and 171 each coordinate FMN. Asn171 provides a ligand contact to substrate. Ser174 (nucleophile) is an active-site residue. Substrate is bound at residue Asn176. Residues Lys216 and Thr244 each coordinate FMN. 245–246 (NT) contacts substrate. Residues Gly267, Gly296, and 317–318 (YT) contribute to the FMN site.

The protein belongs to the dihydroorotate dehydrogenase family. Type 2 subfamily. Monomer. FMN is required as a cofactor.

It localises to the cell membrane. It catalyses the reaction (S)-dihydroorotate + a quinone = orotate + a quinol. It participates in pyrimidine metabolism; UMP biosynthesis via de novo pathway; orotate from (S)-dihydroorotate (quinone route): step 1/1. In terms of biological role, catalyzes the conversion of dihydroorotate to orotate with quinone as electron acceptor. In Azotobacter vinelandii (strain DJ / ATCC BAA-1303), this protein is Dihydroorotate dehydrogenase (quinone).